Reading from the N-terminus, the 86-residue chain is Small ribosomal subunit protein bS16 (86 aa).

Belongs to the bacterial ribosomal protein bS16 family.

The chain is Small ribosomal subunit protein bS16 from Nostoc punctiforme (strain ATCC 29133 / PCC 73102).